Here is a 682-residue protein sequence, read N- to C-terminus: Protein ACTIVITY OF BC1 COMPLEX KINASE 1, chloroplastic (682 aa).

Residues 1–79 (MESIHCNSLL…NSTDASVMTT (79 aa)) constitute a chloroplast transit peptide. The 332-residue stretch at 236-567 (KISSQTIAAA…IQVLFKDGVF (332 aa)) folds into the Protein kinase domain. ATP contacts are provided by residues 242 to 250 (IAAASLGQV) and Lys-265. Residue Asp-400 is the Proton acceptor of the active site.

Belongs to the protein kinase superfamily. ADCK protein kinase family. In terms of assembly, interacts with ABC1K3 in plastoglobules (PG). As to expression, expressed in all tissues (e.g. especially in leaves) at all developmental stages from seed germination to flowering, except in the root tips.

The protein resides in the plastid. Its subcellular location is the chloroplast. It is found in the plastoglobule. It carries out the reaction L-seryl-[protein] + ATP = O-phospho-L-seryl-[protein] + ADP + H(+). The enzyme catalyses L-threonyl-[protein] + ATP = O-phospho-L-threonyl-[protein] + ADP + H(+). In terms of biological role, kinase that can phosphorylate the tocopherol cyclase VTE1, a key enzyme of tocopherol (vitamin E) metabolism and involved in the recycling of oxidated alpha-tocopherol quinone, possibly stabilizing it at plastoglobules. Also regulates plastoglobule protein composition. Prevents photodamage of chloroplasts under continuous red light, thus working in opposition to ABC1K3. Together with ABC1K1, contributes to plastoglobule (PG) function in prenyl-lipid metabolism, stress response, and thylakoid remodeling. Involved in chlorophyll degradation and in the maintenance of the number of chlorophyll-binding photosynthetic thylakoid membranes. Ensures photosynthetic electron transport by regulating the homeostasis of plastoquinone, beta-carotene and xanthophyll lutein, as well as membrane antioxidant tocopherol metabolism. Seems to affect specifically stability or turnover of D1 protein, product of psbA, one of the four core subunits of the photosystem II (PSII). Required for photooxidative stress responses, including the induction of oxidative stress response genes (e.g. FSD1, CSD1, CAT1, and UTG71C1), to prevent photosystem II core and chlorophyll degradations. This chain is Protein ACTIVITY OF BC1 COMPLEX KINASE 1, chloroplastic, found in Arabidopsis thaliana (Mouse-ear cress).